Consider the following 895-residue polypeptide: MNKHHPKLRSFYSIRKSTLGVASVIVSTLFLITSQHQAQAAENTNTSDKISENQNNNATTTQPPKDTNQTQPATQPANTAKNYPAADESLKDAIKDPALENKEHDIGPREQVNFQLLDKNNETQYYHFFSIKDPADVYYTKKKAEVELDINTASTWKKFEVYENNQKLPVRLVSYSPVPEDHAYIRFPVSDGTQELKIVSSTQIDDGEETNYDYTKLVFAKPIYNDPSLVKSDTNDAVVTNDQSSSVASNQTNTNTSNQNTSTINNANNQPQATTNMSQPAQPKSSTNADQASSQPAHETNSNGNTNDKTNESSNQSDVNQQYPPADESLQDAIKNPAIIDKEHTADNWRPIDFQMKNDKGERQFYHYASTVEPATVIFTKTGPIIELGLKTASTWKKFEVYEGDKKLPVELVSYDSDKDYAYIRFPVSNGTREVKIVSSIEYGENIHEDYDYTLMVFAQPITNNPDDYVDEETYNLQKLLAPYHKAKTLERQVYELEKLQEKLPEKYKAEYKKKLDQTRVELADQVKSAVTEFENVTPTNDQLTDLQEAHFVVFESEENSESVMDGFVEHPFYTATLNGQKYVVMKTKDDSYWKDLIVEGKRVTTVSKDPKNNSRTLIFPYIPDKAVYNAIVKVVVANIGYEGQYHVRIINQDINTKDDDTSQNNTSEPLNVQTGQEGKVADTDVAENSSTATNPKDASDKADVIEPESDVVKDADNNIDKDVQHDVDHLSDMSDNNHFDKYDLKEMDTQIAKDTDRNVDKDADNSVGMSSNVDTDKDSNKNKDKVIQLNHIADKNNHTGKAAKLDVVKQNYNNTDKVTDKKTTEHLPSDIHKTVDKTVKTKEKAGTPSKENKLSQSKMLPKTGETTSSQSWWGLYALLGMLALFIPKFRKESK.

Positions 1–40 (MNKHHPKLRSFYSIRKSTLGVASVIVSTLFLITSQHQAQA) are cleaved as a signal peptide. A disordered region spans residues 42-85 (ENTNTSDKISENQNNNATTTQPPKDTNQTQPATQPANTAKNYPA). Residues 53-62 (NQNNNATTTQ) show a composition bias toward low complexity. A compositionally biased stretch (polar residues) spans 63–81 (PPKDTNQTQPATQPANTAK). An NEAT 1 domain is found at 105–232 (DIGPREQVNF…IYNDPSLVKS (128 aa)). The segment at 241 to 324 (NDQSSSVASN…NQSDVNQQYP (84 aa)) is disordered. The segment covering 243–276 (QSSSVASNQTNTNTSNQNTSTINNANNQPQATTN) has biased composition (low complexity). Over residues 277–323 (MSQPAQPKSSTNADQASSQPAHETNSNGNTNDKTNESSNQSDVNQQY) the composition is skewed to polar residues. 2 NEAT domains span residues 345–471 (TADN…DYVD) and 543–660 (QLTD…TKDD). Disordered stretches follow at residues 657–720 (TKDD…DNNI), 751–782 (QIAK…DSNK), and 841–868 (KTKE…GETT). Composition is skewed to polar residues over residues 663–677 (SQNN…QTGQ) and 687–697 (AENSSTATNPK). Basic and acidic residues-rich tracts occupy residues 698–720 (DASD…DNNI), 751–765 (QIAK…KDAD), and 841–854 (KTKE…KENK). The segment covering 855–868 (LSQSKMLPKTGETT) has biased composition (polar residues). Positions 861–865 (LPKTG) match the LPXTG sorting signal motif. Pentaglycyl murein peptidoglycan amidated threonine is present on Thr864. Residues 865–895 (GETTSSQSWWGLYALLGMLALFIPKFRKESK) constitute a propeptide, removed by sortase.

The protein belongs to the IsdH family.

It localises to the secreted. The protein localises to the cell wall. Binds human plasma haptoglobin-hemoglobin complexes, haptoglobin and hemoglobin. Binds haptoglobin-hemoglobin complexes with significantly higher affinity than haptoglobin alone. The protein is Iron-regulated surface determinant protein H (isdH) of Staphylococcus aureus (strain COL).